The following is a 193-amino-acid chain: Bifunctional protein PyrR (193 aa).

Residues 48–49 (TR), Arg-89, Arg-93, 110–118 (DDVLFSGRT), Arg-143, and Val-167 contribute to the substrate site. A PRPP-binding motif is present at residues 106 to 118 (VVLVDDVLFSGRT).

It belongs to the purine/pyrimidine phosphoribosyltransferase family. PyrR subfamily.

The enzyme catalyses UMP + diphosphate = 5-phospho-alpha-D-ribose 1-diphosphate + uracil. In terms of biological role, regulates the transcription of the pyrimidine nucleotide (pyr) operon in response to exogenous pyrimidines. Its function is as follows. Also displays a weak uracil phosphoribosyltransferase activity which is not physiologically significant. The sequence is that of Bifunctional protein PyrR from Streptomyces coelicolor (strain ATCC BAA-471 / A3(2) / M145).